The sequence spans 379 residues: PqqA peptide cyclase (379 aa).

The 213-residue stretch at 8–220 (LPAPIGLLAE…IRVVEEARER (213 aa)) folds into the Radical SAM core domain. 3 residues coordinate [4Fe-4S] cluster: Cys22, Cys26, and Cys29.

Belongs to the radical SAM superfamily. PqqE family. Interacts with PqqD. The interaction is necessary for activity of PqqE. Requires [4Fe-4S] cluster as cofactor.

The enzyme catalyses [PQQ precursor protein] + S-adenosyl-L-methionine = E-Y cross-linked-[PQQ precursor protein] + 5'-deoxyadenosine + L-methionine + H(+). It participates in cofactor biosynthesis; pyrroloquinoline quinone biosynthesis. In terms of biological role, catalyzes the cross-linking of a glutamate residue and a tyrosine residue in the PqqA protein as part of the biosynthesis of pyrroloquinoline quinone (PQQ). The protein is PqqA peptide cyclase of Methylobacterium nodulans (strain LMG 21967 / CNCM I-2342 / ORS 2060).